The chain runs to 182 residues: Large ribosomal subunit protein uL6 (182 aa).

The protein belongs to the universal ribosomal protein uL6 family. As to quaternary structure, part of the 50S ribosomal subunit.

In terms of biological role, this protein binds to the 23S rRNA, and is important in its secondary structure. It is located near the subunit interface in the base of the L7/L12 stalk, and near the tRNA binding site of the peptidyltransferase center. The sequence is that of Large ribosomal subunit protein uL6 from Nostoc sp. (strain PCC 7120 / SAG 25.82 / UTEX 2576).